We begin with the raw amino-acid sequence, 369 residues long: Transforming protein Maf (369 aa).

2 disordered regions span residues 57–85 (STPM…TDQK) and 169–243 (GGAP…GLHF). The span at 173 to 183 (HYHHHHHHPHH) shows a compositional bias: basic residues. The span at 184 to 193 (GGGGGGGGHP) shows a compositional bias: gly residues. The segment covering 194–211 (HGAAPGSAPPSSASSSAA) has biased composition (low complexity). Over residues 212-226 (GSGGGGGGGGGGAGG) the composition is skewed to gly residues. The interval 274–299 (RLKQKRRTLKNRGYAQSCRFKRVQQR) is basic motif. In terms of domain architecture, bZIP spans 274-337 (RLKQKRRTLK…DAYKEKYEKL (64 aa)). The segment at 302–323 (LESEKNQLLQQVEHLKQEISRL) is leucine-zipper. The disordered stretch occupies residues 341-369 (GFRENGSSSDNPSSPEFFMYPRESSTTVM). Over residues 345 to 354 (NGSSSDNPSS) the composition is skewed to polar residues.

It belongs to the bZIP family. Maf subfamily.

It localises to the host nucleus. Functionally, might be a transcriptional trans-activator. This Galliformes protein is Transforming protein Maf (V-MAF).